The following is a 280-amino-acid chain: Ribonuclease Z (280 aa).

Residues His-61, His-63, Asp-65, His-66, His-153, Asp-176, and His-240 each contribute to the Zn(2+) site. The active-site Proton acceptor is the Asp-65.

The protein belongs to the RNase Z family. In terms of assembly, homodimer. Zn(2+) serves as cofactor.

It catalyses the reaction Endonucleolytic cleavage of RNA, removing extra 3' nucleotides from tRNA precursor, generating 3' termini of tRNAs. A 3'-hydroxy group is left at the tRNA terminus and a 5'-phosphoryl group is left at the trailer molecule.. Functionally, zinc phosphodiesterase, which displays some tRNA 3'-processing endonuclease activity. Probably involved in tRNA maturation, by removing a 3'-trailer from precursor tRNA. This is Ribonuclease Z from Mycobacterium bovis (strain BCG / Pasteur 1173P2).